A 421-amino-acid polypeptide reads, in one-letter code: 4-hydroxy-3-methylbut-2-en-1-yl diphosphate synthase (flavodoxin) (421 aa).

[4Fe-4S] cluster contacts are provided by Cys298, Cys301, Cys344, and Glu351.

Belongs to the IspG family. The cofactor is [4Fe-4S] cluster.

It carries out the reaction (2E)-4-hydroxy-3-methylbut-2-enyl diphosphate + oxidized [flavodoxin] + H2O + 2 H(+) = 2-C-methyl-D-erythritol 2,4-cyclic diphosphate + reduced [flavodoxin]. The protein operates within isoprenoid biosynthesis; isopentenyl diphosphate biosynthesis via DXP pathway; isopentenyl diphosphate from 1-deoxy-D-xylulose 5-phosphate: step 5/6. Its function is as follows. Converts 2C-methyl-D-erythritol 2,4-cyclodiphosphate (ME-2,4cPP) into 1-hydroxy-2-methyl-2-(E)-butenyl 4-diphosphate. This chain is 4-hydroxy-3-methylbut-2-en-1-yl diphosphate synthase (flavodoxin), found in Neisseria meningitidis serogroup C / serotype 2a (strain ATCC 700532 / DSM 15464 / FAM18).